The chain runs to 189 residues: PTS system glucose-specific EIIA component (189 aa).

The PTS EIIA type-1 domain occupies 31-135 (DEAFAEKIVG…SVITPVVIAN (105 aa)). Zn(2+) contacts are provided by His68 and His83. His83 acts as the Tele-phosphohistidine intermediate; for EIIA activity in catalysis. A Phosphohistidine; by HPr modification is found at His83.

Heterodimer with glycerol kinase (glpk). The cofactor is Zn(2+).

Its subcellular location is the cytoplasm. In terms of biological role, the phosphoenolpyruvate-dependent sugar phosphotransferase system (sugar PTS), a major carbohydrate active transport system, catalyzes the phosphorylation of incoming sugar substrates concomitantly with their translocation across the cell membrane. The enzyme II complex composed of PtsG and Crr is involved in glucose transport. The chain is PTS system glucose-specific EIIA component (crr) from Borreliella burgdorferi (strain ATCC 35210 / DSM 4680 / CIP 102532 / B31) (Borrelia burgdorferi).